A 224-amino-acid chain; its full sequence is Phosphoglycolate phosphatase (224 aa).

Aspartate 10 (nucleophile) is an active-site residue. Aspartate 10, aspartate 12, and aspartate 176 together coordinate Mg(2+).

The protein belongs to the HAD-like hydrolase superfamily. CbbY/CbbZ/Gph/YieH family. Mg(2+) is required as a cofactor.

It carries out the reaction 2-phosphoglycolate + H2O = glycolate + phosphate. The protein operates within organic acid metabolism; glycolate biosynthesis; glycolate from 2-phosphoglycolate: step 1/1. Functionally, specifically catalyzes the dephosphorylation of 2-phosphoglycolate. Is involved in the dissimilation of the intracellular 2-phosphoglycolate formed during the DNA repair of 3'-phosphoglycolate ends, a major class of DNA lesions induced by oxidative stress. The chain is Phosphoglycolate phosphatase from Pasteurella multocida (strain Pm70).